Reading from the N-terminus, the 333-residue chain is MSLFLSNVILHQLRKNDNDELVVNYRAESLRNDTSTENLVAELHRVFNAKAGKGFGCFKSDSEFQLWLQEMRRGTLPFYEFSQQSAQRLKNELAKYPFADEGILVMAEYQSLATDYLFIGLLPLNQSLKVTEGLDISATDYLDINKMDIVARIDLSSYETDKESKRYLSYIKGRVGRKVADFFLDFLQADIGLDTKQQNQVLMQAVEDFCADAKFEKEEVISYKKQVYEYCNDQIKAGDEVRVQELSGELPPSNEGVNFFDFTREQGYQLEESFPADRSTVRKLTKYVGAGGGLNLSFDSLLLGERVFYDPETDTLTIKGTPPNLRDQLTRLR.

This sequence belongs to the YejK family.

It is found in the cytoplasm. The protein resides in the nucleoid. This Vibrio cholerae serotype O1 (strain ATCC 39541 / Classical Ogawa 395 / O395) protein is Nucleoid-associated protein VC0395_A1624/VC395_2154.